The chain runs to 439 residues: Adenylosuccinate synthetase (439 aa).

GTP contacts are provided by residues 25 to 31 (GDEGKGK), 53 to 55 (GHT), and Lys-62. The Proton acceptor role is filled by Asp-26. 2 residues coordinate Mg(2+): Asp-26 and Gly-53. Residues 26–29 (DEGK) and 51–54 (NAGH) each bind IMP. His-54 serves as the catalytic Proton donor. Positions 141, 155, 232, and 247 each coordinate IMP. Thr-307 is a GTP binding site. Substrate is bound at residue 307–313 (TTTNRPR). Arg-311 contacts IMP. GTP contacts are provided by residues Arg-313, 339–341 (KLD), and 425–427 (GVG).

It belongs to the adenylosuccinate synthetase family. In terms of assembly, homodimer. It depends on Mg(2+) as a cofactor.

The protein resides in the cytoplasm. It catalyses the reaction IMP + L-aspartate + GTP = N(6)-(1,2-dicarboxyethyl)-AMP + GDP + phosphate + 2 H(+). It functions in the pathway purine metabolism; AMP biosynthesis via de novo pathway; AMP from IMP: step 1/2. Plays an important role in the salvage pathway for purine nucleotide biosynthesis. Catalyzes the first committed step in the biosynthesis of AMP from IMP. The sequence is that of Adenylosuccinate synthetase from Plasmodium yoelii yoelii.